The sequence spans 1083 residues: DNA primase (1083 aa).

The CHC2-type zinc-finger motif lies at 1022–1061; sequence CLRYPHRGGRTAPRTFVSLRVDHHNRLCISLAQQCFATKC.

The protein belongs to the herpesviridae DNA primase family. As to quaternary structure, associates with the helicase and the primase-associated factor to form the helicase-primase factor.

The protein resides in the host nucleus. Functionally, essential component of the helicase/primase complex. Unwinds the DNA at the replication forks and generates single-stranded DNA for both leading and lagging strand synthesis. The primase initiates primer synthesis and thereby produces large amount of short RNA primers on the lagging strand that the polymerase elongates using dNTPs. In Homo sapiens (Human), this protein is DNA primase.